A 155-amino-acid chain; its full sequence is Interleukin-2 (155 aa).

Residues 1 to 20 (MYKMQLLSCIALTLVLVANS) form the signal peptide. A glycan (O-linked (GalNAc...) threonine) is linked at threonine 23. Cysteine 79 and cysteine 127 are oxidised to a cystine.

It belongs to the IL-2 family.

The protein localises to the secreted. Its function is as follows. Cytokine produced by activated CD4-positive helper T-cells and to a lesser extend activated CD8-positive T-cells and natural killer (NK) cells that plays pivotal roles in the immune response and tolerance. Binds to a receptor complex composed of either the high-affinity trimeric IL-2R (IL2RA/CD25, IL2RB/CD122 and IL2RG/CD132) or the low-affinity dimeric IL-2R (IL2RB and IL2RG). Interaction with the receptor leads to oligomerization and conformation changes in the IL-2R subunits resulting in downstream signaling starting with phosphorylation of JAK1 and JAK3. In turn, JAK1 and JAK3 phosphorylate the receptor to form a docking site leading to the phosphorylation of several substrates including STAT5. This process leads to activation of several pathways including STAT, phosphoinositide-3-kinase/PI3K and mitogen-activated protein kinase/MAPK pathways. Functions as a T-cell growth factor and can increase NK-cell cytolytic activity as well. Promotes strong proliferation of activated B-cells and subsequently immunoglobulin production. Plays a pivotal role in regulating the adaptive immune system by controlling the survival and proliferation of regulatory T-cells, which are required for the maintenance of immune tolerance. Moreover, participates in the differentiation and homeostasis of effector T-cell subsets, including Th1, Th2, Th17 as well as memory CD8-positive T-cells. In Halichoerus grypus (Gray seal), this protein is Interleukin-2 (IL2).